The following is an 805-amino-acid chain: FAD-dependent monooxygenase verC1 (805 aa).

Positions 1–20 are cleaved as a signal peptide; that stretch reads MTFRVIIVGGGVAGLTLASA. Residues glutamate 32, alanine 46, and arginine 107 each coordinate FAD. Asparagine 132 carries N-linked (GlcNAc...) asparagine glycosylation. Tyrosine 214 is a catalytic residue. FAD-binding residues include aspartate 306 and alanine 319. 7 consecutive transmembrane segments (helical) span residues 551–571, 604–624, 632–652, 671–691, 703–723, 726–746, and 761–781; these read ALTM…AGLG, IAVL…AFFW, SWLF…YLFS, LPVI…FWMW, VFFP…VCAI, WDML…IWDL, and IYGV…LGWL.

Belongs to the paxM FAD-dependent monooxygenase family.

The protein resides in the membrane. Its pathway is secondary metabolite biosynthesis; terpenoid biosynthesis. It functions in the pathway mycotoxin biosynthesis. Functionally, FAD-dependent monooxygenase; part of the gene cluster that mediates the biosynthesis of the neurotoxin verrucosidin, a methylated alpha-pyrone polyketide that inhibits oxidative phosphorylation in mitochondria and thereby causes neurological diseases. The carbon backbone of verrucosidin is synthesized by the HR-PKS verA, and further modified by the other verrucodidin cluster enzymes. This chain is FAD-dependent monooxygenase verC1, found in Penicillium polonicum.